Here is a 233-residue protein sequence, read N- to C-terminus: 5'-methylthioadenosine/S-adenosylhomocysteine nucleosidase (233 aa).

E12 serves as the catalytic Proton acceptor. Residues G78, I153, and 174-175 (ME) each bind substrate. The active-site Proton donor is D198.

It belongs to the PNP/UDP phosphorylase family. MtnN subfamily.

The catalysed reaction is S-adenosyl-L-homocysteine + H2O = S-(5-deoxy-D-ribos-5-yl)-L-homocysteine + adenine. It carries out the reaction S-methyl-5'-thioadenosine + H2O = 5-(methylsulfanyl)-D-ribose + adenine. The enzyme catalyses 5'-deoxyadenosine + H2O = 5-deoxy-D-ribose + adenine. Its pathway is amino-acid biosynthesis; L-methionine biosynthesis via salvage pathway; S-methyl-5-thio-alpha-D-ribose 1-phosphate from S-methyl-5'-thioadenosine (hydrolase route): step 1/2. Its function is as follows. Catalyzes the irreversible cleavage of the glycosidic bond in both 5'-methylthioadenosine (MTA) and S-adenosylhomocysteine (SAH/AdoHcy) to adenine and the corresponding thioribose, 5'-methylthioribose and S-ribosylhomocysteine, respectively. Also cleaves 5'-deoxyadenosine, a toxic by-product of radical S-adenosylmethionine (SAM) enzymes, into 5-deoxyribose and adenine. This Exiguobacterium sp. (strain ATCC BAA-1283 / AT1b) protein is 5'-methylthioadenosine/S-adenosylhomocysteine nucleosidase.